The primary structure comprises 185 residues: Small ribosomal subunit protein bS16 (185 aa).

The disordered stretch occupies residues 83-185 (QWTHGNNPEK…APASEETTEG (103 aa)). Residues 89–125 (NPEKAKPGKKAQERDAERTQRDADRVAAEAQAKEDAK) show a composition bias toward basic and acidic residues. Composition is skewed to low complexity over residues 126–146 (AAAA…AAAP) and 159–176 (VEAA…AEEA).

This sequence belongs to the bacterial ribosomal protein bS16 family.

In Caulobacter sp. (strain K31), this protein is Small ribosomal subunit protein bS16.